The sequence spans 1849 residues: SH3 and multiple ankyrin repeat domains protein 2 (1849 aa).

The tract at residues 1 to 33 is disordered; the sequence is MPRSPTSSEDEMAQSFSDYSVGSESDSSKEETI. The segment covering 15-25 has biased composition (low complexity); it reads SFSDYSVGSES. ANK repeat units lie at residues 196 to 226, 230 to 259, 263 to 293, 297 to 326, 330 to 359, and 363 to 393; these read TGETPLTLAAQLDDSVEVIKALKNGGAHLDF, DGMTALHKAARARNQVALKTLLELGASPDY, YGLTPLYHTAIVGGDPYCCELLLHEHATVCC, NGWHEIHQACRYGHVQHLEHLLFYGADMSA, SGNTALHICALYNQDSCARVLLFRGGNKEL, and NSQTPFQVAIIAGNFELAEYIKNHKETDIVP. The interval 451–493 is disordered; the sequence is QQMPSKPEGAAKTIGSYVPGPRSRSPSLNRLGGAGEDGKRPQP. The region spanning 526–585 is the SH3 domain; the sequence is VPGRLFVAVKPYQPQVDGEIPLHRGDRVKVLSIGEGGFWEGSARGHIGWFPAECVEEVQC. Residues 626-720 enclose the PDZ domain; sequence TVVLQKKDNE…HLVLKVVTVT (95 aa). Positions 764–774 are enriched in basic and acidic residues; it reads SVRKKKDKPEE. The tract at residues 764-808 is disordered; sequence SVRKKKDKPEEIVPASKPSRAAENMAVEPRVATIKQRPSSRCFPA. Residue S831 is modified to Phosphoserine. Position 860 is a phosphothreonine (T860). Residues 878 to 910 form a disordered region; sequence LSMPDTSEDIPPPPQSVPPSPPPPSPTTYNCPK. The segment covering 887 to 903 has biased composition (pro residues); sequence IPPPPQSVPPSPPPPSP. S960 is modified (phosphoserine). 4 disordered regions span residues 1013-1293, 1328-1371, 1432-1526, and 1574-1594; these read LVKQ…RKGD, LQEE…TTVP, PALS…GGEN, and SFVIPPPAPPPPPGSAQPGMA. Over residues 1040–1052 the composition is skewed to low complexity; sequence STSSSGKSSQGSS. Positions 1086–1097 are enriched in basic and acidic residues; it reads VRDREKRLEARR. S1099 bears the Phosphoserine mark. The span at 1128 to 1138 shows a compositional bias: acidic residues; that stretch reads EEGDFADEDSA. 3 stretches are compositionally biased toward low complexity: residues 1159 to 1170, 1181 to 1199, and 1208 to 1221; these read GGAEASAPGEAG, GPESSPAVPSASSGTAGPG, and RLLDPSSPLALALS. The span at 1274 to 1293 shows a compositional bias: basic and acidic residues; the sequence is RRQETENKYETDLGRDRKGD. Residue T1278 is modified to Phosphothreonine. An SH3-binding motif is present at residues 1327–1333; the sequence is ALQEEDE. The segment covering 1343–1357 has biased composition (low complexity); the sequence is SSPSEVPEGVSETEG. Over residues 1445-1460 the composition is skewed to polar residues; that stretch reads TPQSPSLNSSQPTNSA. The span at 1494-1505 shows a compositional bias: basic and acidic residues; that stretch reads VDSRSSSDHHLE. Positions 1506-1522 are enriched in low complexity; sequence TTSTISTVSSISTLSSE. Positions 1577–1588 are enriched in pro residues; sequence IPPPAPPPPPGS. A glycan (O-linked (GlcNAc) threonine) is linked at T1667. Positions 1678-1692 are enriched in polar residues; it reads FTVRPGTSQPITLQS. The disordered stretch occupies residues 1678–1776; sequence FTVRPGTSQP…SILQQPISNK (99 aa). 2 positions are modified to phosphoserine: S1709 and S1713. Low complexity-rich tracts occupy residues 1721 to 1738 and 1760 to 1774; these read TLPAPLSAATASPSPALS and RSRSPSPSILQQPIS. An SAM domain is found at 1786-1849; the sequence is WTKPDVADWL…ERALKQLLDR (64 aa).

The protein belongs to the SHANK family. Is part of a complex with DLG4/PSD-95 and DLGAP1/GKAP. Interacts with CTTN/cortactin SH3 domain, DLGAP1/GKAP and alpha-latrotoxin receptor 1. Interacts with DNM2, DBNL, GRID2, BAIAP2, SLC9A3, PLCB3 and CFTR. Interacts (via proline-rich region) with PDE4D. Interacts with ABI1 (via SH3 domain). As to expression, isoform 3 is present in epithelial colonic cells (at protein level).

It localises to the apical cell membrane. The protein resides in the cytoplasm. The protein localises to the synapse. Its subcellular location is the postsynaptic density. It is found in the cell projection. It localises to the growth cone. The protein resides in the dendritic spine. Its function is as follows. Seems to be an adapter protein in the postsynaptic density (PSD) of excitatory synapses that interconnects receptors of the postsynaptic membrane including NMDA-type and metabotropic glutamate receptors, and the actin-based cytoskeleton. May play a role in the structural and functional organization of the dendritic spine and synaptic junction. The chain is SH3 and multiple ankyrin repeat domains protein 2 (SHANK2) from Homo sapiens (Human).